Consider the following 227-residue polypeptide: uncharacterized protein (227 aa).

Residues 52 to 100 (NKRAKLYRERNKAKLKEKQHKWYHKGGGKEHKKLYDKINLEKSNMRDKN) adopt a coiled-coil conformation.

This sequence belongs to the mimivirus L246/L426 family.

This is an uncharacterized protein from Acanthamoeba polyphaga mimivirus (APMV).